The sequence spans 484 residues: tRNA sulfurtransferase (484 aa).

Positions 63-167 (KEMGERLTCM…DKRLFVIHSQ (105 aa)) constitute a THUMP domain. ATP contacts are provided by residues 185–186 (LM), Lys-267, Gly-289, and Gln-298. Cys-346 and Cys-457 are oxidised to a cystine. Positions 405–483 (ALAGQIVIDI…GHANVRVYRP (79 aa)) constitute a Rhodanese domain. Catalysis depends on Cys-457, which acts as the Cysteine persulfide intermediate.

Belongs to the ThiI family.

It localises to the cytoplasm. It carries out the reaction [ThiI sulfur-carrier protein]-S-sulfanyl-L-cysteine + a uridine in tRNA + 2 reduced [2Fe-2S]-[ferredoxin] + ATP + H(+) = [ThiI sulfur-carrier protein]-L-cysteine + a 4-thiouridine in tRNA + 2 oxidized [2Fe-2S]-[ferredoxin] + AMP + diphosphate. The catalysed reaction is [ThiS sulfur-carrier protein]-C-terminal Gly-Gly-AMP + S-sulfanyl-L-cysteinyl-[cysteine desulfurase] + AH2 = [ThiS sulfur-carrier protein]-C-terminal-Gly-aminoethanethioate + L-cysteinyl-[cysteine desulfurase] + A + AMP + 2 H(+). It functions in the pathway cofactor biosynthesis; thiamine diphosphate biosynthesis. Functionally, catalyzes the ATP-dependent transfer of a sulfur to tRNA to produce 4-thiouridine in position 8 of tRNAs, which functions as a near-UV photosensor. Also catalyzes the transfer of sulfur to the sulfur carrier protein ThiS, forming ThiS-thiocarboxylate. This is a step in the synthesis of thiazole, in the thiamine biosynthesis pathway. The sulfur is donated as persulfide by IscS. This chain is tRNA sulfurtransferase, found in Pseudomonas fluorescens (strain Pf0-1).